We begin with the raw amino-acid sequence, 182 residues long: Inorganic pyrophosphatase (182 aa).

Substrate-binding residues include K30, R44, and Y56. D66, D71, and D103 together coordinate Mg(2+). Y142 is a substrate binding site.

Belongs to the PPase family. Homohexamer. Requires Mg(2+) as cofactor.

The protein localises to the cytoplasm. The catalysed reaction is diphosphate + H2O = 2 phosphate + H(+). Its function is as follows. Catalyzes the hydrolysis of inorganic pyrophosphate (PPi) forming two phosphate ions. The chain is Inorganic pyrophosphatase from Buchnera aphidicola subsp. Acyrthosiphon pisum (strain APS) (Acyrthosiphon pisum symbiotic bacterium).